Reading from the N-terminus, the 38-residue chain is Large ribosomal subunit protein bL36 (38 aa).

This sequence belongs to the bacterial ribosomal protein bL36 family.

This chain is Large ribosomal subunit protein bL36, found in Buchnera aphidicola subsp. Acyrthosiphon pisum (strain 5A).